The primary structure comprises 37 residues: MKVRPSVKPICDKCKVIRRKGKVRVICENPKHKQRQG.

The protein belongs to the bacterial ribosomal protein bL36 family.

The protein is Large ribosomal subunit protein bL36 of Halothermothrix orenii (strain H 168 / OCM 544 / DSM 9562).